The chain runs to 502 residues: Lysine--tRNA ligase (502 aa).

Mg(2+) contacts are provided by E412 and E419.

It belongs to the class-II aminoacyl-tRNA synthetase family. In terms of assembly, homodimer. Mg(2+) is required as a cofactor.

The protein localises to the cytoplasm. The catalysed reaction is tRNA(Lys) + L-lysine + ATP = L-lysyl-tRNA(Lys) + AMP + diphosphate. This is Lysine--tRNA ligase from Nitrosomonas europaea (strain ATCC 19718 / CIP 103999 / KCTC 2705 / NBRC 14298).